A 710-amino-acid polypeptide reads, in one-letter code: Iron-sulfur clusters transporter ATM1, mitochondrial (710 aa).

The N-terminal 38 residues, 1-38 (MWLSLPRSGYGSVATLTSKRVLACLTPLRQFSTSPAVS), are a transit peptide targeting the mitochondrion. A compositionally biased stretch (polar residues) spans 35–52 (PAVSNANHKNVDNINKSP). The disordered stretch occupies residues 35–83 (PAVSNANHKNVDNINKSPANDAANNAVEKGDKPTTSPEKLATKAEKSSA). Residues 39–129 (NANHKNVDNI…PKGKTSVKFR (91 aa)) lie on the Mitochondrial matrix side of the membrane. The helical transmembrane segment at 130–151 (VLVAVALLVGAKLLNVQVPFFF) threads the bilayer. The region spanning 130 to 419 (VLVAVALLVG…LGSVYRDLRQ (290 aa)) is the ABC transmembrane type-1 domain. The Mitochondrial intermembrane segment spans residues 152–173 (KEIIDDMNIEWNSATALGVGIT). The chain crosses the membrane as a helical span at residues 174 to 197 (ALIFSYGAARFGAVLFGELRNAIF). Residues 198-246 (ASVAQKAIKEVATNVFRHLLKLDMAFHLSRQTGGITRAIDRGTKGISFV) lie on the Mitochondrial matrix side of the membrane. A helical transmembrane segment spans residues 247–270 (LSSMVFHIIPIALEISLVCGILSY). A topological domain (mitochondrial intermembrane) is located at residue Asn271. A helical membrane pass occupies residues 272–292 (FGWKYALVTGATMVSYAIFTI). The Mitochondrial matrix segment spans residues 293–358 (TTTSWRTKFR…ASIKIATSLA (66 aa)). Glutathione-binding positions include 298 to 302 (RTKFR) and 361 to 364 (NSGQ). A helical transmembrane segment spans residues 359-377 (FLNSGQNLIFSSALTAMMY). The Mitochondrial intermembrane portion of the chain corresponds to 378 to 392 (MTCCGVADGSLTVGD). Residues 393 to 414 (LVLVNQLVFQLSVPLNFLGSVY) traverse the membrane as a helical segment. Position 411 (Gly411) interacts with glutathione. The Mitochondrial matrix segment spans residues 415 to 710 (RDLRQSLLDM…AEEKAAKKDV (296 aa)). The region spanning 453 to 687 (IRFENVTYGY…DGLYKSMWDA (235 aa)) is the ABC transporter domain. ATP-binding positions include Tyr462 and 486 to 497 (GPSGSGKSTILK).

The protein belongs to the ABC transporter superfamily. ABCB family. Heavy Metal importer (TC 3.A.1.210) subfamily. As to quaternary structure, homodimer.

Its subcellular location is the mitochondrion inner membrane. In terms of biological role, performs an essential function in the generation of cytoplasmic iron-sulfur proteins by mediating the ATP-dependent export of Fe/S cluster precursors synthesized by NFS1 and other mitochondrial proteins. Hydrolyzes ATP. Binds glutathione and may function by transporting a glutathione-conjugated iron-sulfur compound. The polypeptide is Iron-sulfur clusters transporter ATM1, mitochondrial (Yarrowia lipolytica (strain CLIB 122 / E 150) (Yeast)).